A 383-amino-acid chain; its full sequence is Probable butyrate kinase (383 aa).

The protein belongs to the acetokinase family.

The protein localises to the cytoplasm. The enzyme catalyses butanoate + ATP = butanoyl phosphate + ADP. This chain is Probable butyrate kinase, found in Deinococcus radiodurans (strain ATCC 13939 / DSM 20539 / JCM 16871 / CCUG 27074 / LMG 4051 / NBRC 15346 / NCIMB 9279 / VKM B-1422 / R1).